The primary structure comprises 648 residues: Macrolide export ATP-binding/permease protein MacB (648 aa).

Residues 6–251 (IRVRGVSRAF…GPSAGWRGAI (246 aa)) enclose the ABC transporter domain. Residue 42–49 (GASGSGKS) participates in ATP binding. The next 4 membrane-spanning stretches (helical) occupy residues 273–293 (LLTM…SALG), 528–548 (VAVI…LVSV), 572–592 (FLIE…MLAL), and 613–633 (SIIV…FLPA).

This sequence belongs to the ABC transporter superfamily. Macrolide exporter (TC 3.A.1.122) family. As to quaternary structure, homodimer.

The protein resides in the cell inner membrane. Functionally, non-canonical ABC transporter that contains transmembrane domains (TMD), which form a pore in the inner membrane, and an ATP-binding domain (NBD), which is responsible for energy generation. Confers resistance against macrolides. The sequence is that of Macrolide export ATP-binding/permease protein MacB from Agrobacterium fabrum (strain C58 / ATCC 33970) (Agrobacterium tumefaciens (strain C58)).